The chain runs to 120 residues: Late cornified envelope-like proline-rich protein 1 (120 aa).

The protein belongs to the cornifin (SPRR) family.

The polypeptide is Late cornified envelope-like proline-rich protein 1 (Lelp1) (Mus musculus (Mouse)).